The primary structure comprises 185 residues: ATP-dependent protease subunit HslV (185 aa).

Thr-13 is a catalytic residue. The Na(+) site is built by Gly-167, Cys-170, and Thr-173.

This sequence belongs to the peptidase T1B family. HslV subfamily. As to quaternary structure, a double ring-shaped homohexamer of HslV is capped on each side by a ring-shaped HslU homohexamer. The assembly of the HslU/HslV complex is dependent on binding of ATP.

It is found in the cytoplasm. The catalysed reaction is ATP-dependent cleavage of peptide bonds with broad specificity.. Its activity is regulated as follows. Allosterically activated by HslU binding. In terms of biological role, protease subunit of a proteasome-like degradation complex believed to be a general protein degrading machinery. The protein is ATP-dependent protease subunit HslV of Sinorhizobium fredii (strain NBRC 101917 / NGR234).